The primary structure comprises 398 residues: MERSQKSARKKKKTSKSGNDRSIRSERKSKQKKPAGEKSQKSRRTRKSRGPKGNGFTSRETIQPSSSGQSEGTTRMDDQKDEKKDDKKEEKKEERKEEKKEEVKEPWSEEEPAKRMVANGFFTTTNVGGTFKQTDNFKTPMDSCPSFKNNMHKIRAPDCPIPEEKLVKLTNGPESFICAAKITVPDFNRTMILTQVPDLSSAPDIADFWRMIHQESIASVVIAVMPLEVTLQQILPLLSGTYSTYGKMFVNNKKVESAVGMTEYCLEIFPDGCSNSLLTTVYHLHNWRQKRGLEVVTDLVATMEKVMKVNDNTVLMSMNGTGRAGTMLTLFTAMLQVQKGKEVNAKETLASLRAERCGIVDNIDQFGTVHRSMACWFKNNSTNEEVQRKVVEFAPSIQ.

Over residues 1–15 (MERSQKSARKKKKTS) the composition is skewed to basic residues. The interval 1–114 (MERSQKSARK…EPWSEEEPAK (114 aa)) is disordered. Over residues 18-40 (GNDRSIRSERKSKQKKPAGEKSQ) the composition is skewed to basic and acidic residues. Positions 41 to 50 (KSRRTRKSRG) are enriched in basic residues. A compositionally biased stretch (polar residues) spans 55–73 (GFTSRETIQPSSSGQSEGT). Residues 74 to 114 (TRMDDQKDEKKDDKKEEKKEERKEEKKEEVKEPWSEEEPAK) show a composition bias toward basic and acidic residues. The Tyrosine-protein phosphatase domain maps to 125-376 (TNVGGTFKQT…GTVHRSMACW (252 aa)).

Belongs to the protein-tyrosine phosphatase family. Non-receptor class subfamily.

It catalyses the reaction O-phospho-L-tyrosyl-[protein] + H2O = L-tyrosyl-[protein] + phosphate. This Caenorhabditis elegans protein is Putative tyrosine-protein phosphatase C15H7.3.